A 167-amino-acid polypeptide reads, in one-letter code: Phosphopantetheine adenylyltransferase (167 aa).

Ser-11 serves as a coordination point for substrate. ATP contacts are provided by residues 11–12 (SF) and His-19. Residues Lys-43, Thr-76, and Arg-90 each coordinate substrate. ATP contacts are provided by residues 91-93 (GIR), Glu-101, and 126-132 (YDALSST).

It belongs to the bacterial CoaD family. In terms of assembly, homohexamer. It depends on Mg(2+) as a cofactor.

The protein localises to the cytoplasm. It catalyses the reaction (R)-4'-phosphopantetheine + ATP + H(+) = 3'-dephospho-CoA + diphosphate. It functions in the pathway cofactor biosynthesis; coenzyme A biosynthesis; CoA from (R)-pantothenate: step 4/5. In terms of biological role, reversibly transfers an adenylyl group from ATP to 4'-phosphopantetheine, yielding dephospho-CoA (dPCoA) and pyrophosphate. This chain is Phosphopantetheine adenylyltransferase, found in Lacticaseibacillus casei (strain BL23) (Lactobacillus casei).